Consider the following 467-residue polypeptide: ATP synthase subunit beta (467 aa).

150–157 (GGAGVGKT) is an ATP binding site.

This sequence belongs to the ATPase alpha/beta chains family. In terms of assembly, F-type ATPases have 2 components, CF(1) - the catalytic core - and CF(0) - the membrane proton channel. CF(1) has five subunits: alpha(3), beta(3), gamma(1), delta(1), epsilon(1). CF(0) has three main subunits: a(1), b(2) and c(9-12). The alpha and beta chains form an alternating ring which encloses part of the gamma chain. CF(1) is attached to CF(0) by a central stalk formed by the gamma and epsilon chains, while a peripheral stalk is formed by the delta and b chains.

The protein localises to the cell inner membrane. The catalysed reaction is ATP + H2O + 4 H(+)(in) = ADP + phosphate + 5 H(+)(out). Functionally, produces ATP from ADP in the presence of a proton gradient across the membrane. The catalytic sites are hosted primarily by the beta subunits. The sequence is that of ATP synthase subunit beta from Aliivibrio fischeri (strain ATCC 700601 / ES114) (Vibrio fischeri).